The sequence spans 677 residues: Methionine--tRNA ligase (677 aa).

The 'HIGH' region motif lies at 15–25 (PYANGSIHLGH). Cys146, Cys149, Cys159, and Cys162 together coordinate Zn(2+). Positions 333-337 (KMSKS) match the 'KMSKS' region motif. Lys336 lines the ATP pocket. One can recognise a tRNA-binding domain in the interval 575 to 677 (DFAKVDLRVA…AGAKPGHQVK (103 aa)).

This sequence belongs to the class-I aminoacyl-tRNA synthetase family. MetG type 1 subfamily. In terms of assembly, homodimer. It depends on Zn(2+) as a cofactor.

The protein localises to the cytoplasm. It carries out the reaction tRNA(Met) + L-methionine + ATP = L-methionyl-tRNA(Met) + AMP + diphosphate. Its function is as follows. Is required not only for elongation of protein synthesis but also for the initiation of all mRNA translation through initiator tRNA(fMet) aminoacylation. This chain is Methionine--tRNA ligase, found in Shigella boydii serotype 18 (strain CDC 3083-94 / BS512).